A 122-amino-acid chain; its full sequence is Large ribosomal subunit protein uL14 (122 aa).

This sequence belongs to the universal ribosomal protein uL14 family. As to quaternary structure, part of the 50S ribosomal subunit. Forms a cluster with proteins L3 and L19. In the 70S ribosome, L14 and L19 interact and together make contacts with the 16S rRNA in bridges B5 and B8.

Functionally, binds to 23S rRNA. Forms part of two intersubunit bridges in the 70S ribosome. The chain is Large ribosomal subunit protein uL14 from Rhizobium etli (strain CIAT 652).